Reading from the N-terminus, the 523-residue chain is NEDD8-activating enzyme E1 regulatory subunit AXL (523 aa).

The protein belongs to the ubiquitin-activating E1 family. ULA1 subfamily. In terms of assembly, heterodimer of ECR1 and AXL1. The complex binds to RUB1/NEDD8 and RCE1.

The protein localises to the nucleus. The protein operates within protein modification; protein neddylation. Functionally, regulatory subunit of the dimeric ECR1-AXL1 E1 enzyme. E1 activates RUB1/NEDD8 by first adenylating its C-terminal glycine residue with ATP, thereafter linking this residue to the side chain of the catalytic cysteine, yielding a RUB1-ECR1 thioester and free AMP. E1 finally transfers RUB1 to the catalytic cysteine of RCE1. May function redundantly with AXR1 in the RUB conjugating pathway. Seems not to be functionally equivalent to AXR1 in vivo. The chain is NEDD8-activating enzyme E1 regulatory subunit AXL from Arabidopsis thaliana (Mouse-ear cress).